Here is a 520-residue protein sequence, read N- to C-terminus: GMP synthase [glutamine-hydrolyzing] (520 aa).

Residues 13 to 205 enclose the Glutamine amidotransferase type-1 domain; sequence KIIVLDYGSQ…ALNICKAKGD (193 aa). Residue C90 is the Nucleophile of the active site. Residues H179 and E181 contribute to the active site. Residues 206 to 395 form the GMPS ATP-PPase domain; that stretch reads WSMDNFIDMQ…LGMPDHIVWR (190 aa). Position 233–239 (233–239) interacts with ATP; it reads SGGVDSS.

As to quaternary structure, homodimer.

It catalyses the reaction XMP + L-glutamine + ATP + H2O = GMP + L-glutamate + AMP + diphosphate + 2 H(+). The protein operates within purine metabolism; GMP biosynthesis; GMP from XMP (L-Gln route): step 1/1. Its function is as follows. Catalyzes the synthesis of GMP from XMP. This is GMP synthase [glutamine-hydrolyzing] from Streptococcus pneumoniae (strain P1031).